The following is a 159-amino-acid chain: Phosphopantetheine adenylyltransferase (159 aa).

Serine 9 contributes to the substrate binding site. ATP-binding positions include 9–10 (SF) and histidine 17. Residues lysine 41, isoleucine 75, and lysine 89 each contribute to the substrate site. Residues 90 to 92 (GLR), glutamate 100, and 124 to 130 (LEHISSS) contribute to the ATP site.

The protein belongs to the bacterial CoaD family. Homohexamer. The cofactor is Mg(2+).

The protein localises to the cytoplasm. It carries out the reaction (R)-4'-phosphopantetheine + ATP + H(+) = 3'-dephospho-CoA + diphosphate. It participates in cofactor biosynthesis; coenzyme A biosynthesis; CoA from (R)-pantothenate: step 4/5. Reversibly transfers an adenylyl group from ATP to 4'-phosphopantetheine, yielding dephospho-CoA (dPCoA) and pyrophosphate. This Bifidobacterium animalis subsp. lactis (strain AD011) protein is Phosphopantetheine adenylyltransferase.